The chain runs to 229 residues: Ribonuclease 3 (229 aa).

The 123-residue stretch at 8–130 folds into the RNase III domain; the sequence is LTELEKIVGY…IIGAIYLDSD (123 aa). E43 lines the Mg(2+) pocket. Residue D47 is part of the active site. Mg(2+) contacts are provided by D116 and E119. The active site involves E119. Positions 157-227 constitute a DRBM domain; the sequence is DPKTRLQELL…ATAALEHLQE (71 aa). The segment at 201–229 is disordered; that stretch reads SPFKGTGTSRRKAEQAAATAALEHLQESA.

The protein belongs to the ribonuclease III family. In terms of assembly, homodimer. Requires Mg(2+) as cofactor.

It localises to the cytoplasm. The enzyme catalyses Endonucleolytic cleavage to 5'-phosphomonoester.. Digests double-stranded RNA. Involved in the processing of primary rRNA transcript to yield the immediate precursors to the large and small rRNAs (23S and 16S). Processes some mRNAs, and tRNAs when they are encoded in the rRNA operon. Processes pre-crRNA and tracrRNA of type II CRISPR loci if present in the organism. This chain is Ribonuclease 3, found in Idiomarina loihiensis (strain ATCC BAA-735 / DSM 15497 / L2-TR).